The chain runs to 942 residues: NBPF family member NBPF8 (942 aa).

Residues 89–130 (AEELRQYKVLVHSQERELTQLKEKLQEGRDASRSLNEHLQAL) are a coiled coil. A disordered region spans residues 161–203 (KLSPENDEDEDEDVQVEEDEKVQKSSAPREVQKAEESKVPEDS). The segment covering 165-180 (ENDEDEDEDVQVEEDE) has biased composition (acidic residues). Residues 165–259 (ENDEDEDEDV…ECQDALNILS (95 aa)) enclose the Olduvai 1 domain. Residues 190–201 (EVQKAEESKVPE) show a composition bias toward basic and acidic residues. A coiled-coil region spans residues 339-401 (KSMLRNERQF…LSLNEHLQAL (63 aa)). Olduvai domains lie at 436-528 (ENDN…HIIP), 529-617 (ENES…ATGP), 620-675 (SREL…VDMD), 676-767 (EIEK…PPCP), 770-843 (SREL…RSKK), and 844-904 (KRRR…RSVF). Disordered stretches follow at residues 451–474 (EKVQKSSAPREMQKAEEKEVPEDS) and 528–566 (PENESDDEEEEEKGPVSPRNLQESEEEEVPQESWDEGYS). Acidic residues-rich tracts occupy residues 530-539 (NESDDEEEEE) and 550-562 (ESEEEEVPQESWD). Positions 831 to 849 (GKGKIRRGRRSKKKRRRGR) are enriched in basic residues. Residues 831 to 863 (GKGKIRRGRRSKKKRRRGRKEGEEDQNPPCPRL) form a disordered region.

This sequence belongs to the NBPF family. In terms of tissue distribution, expressed in the mammary gland.

It is found in the cytoplasm. In Homo sapiens (Human), this protein is NBPF family member NBPF8.